Consider the following 470-residue polypeptide: Maltose fermentation regulatory protein YPR196W (470 aa).

The zn(2)-C6 fungal-type DNA-binding region spans 8 to 34 (CDCCRVRRVKCDRNRPCDRCRQRNLRC). A Nuclear localization signal motif is present at residues 41–49 (RKRGPKSIG).

This sequence belongs to the MAL13 family.

It localises to the nucleus. Functionally, may regulate the transcription of maltase and maltose permease genes. The sequence is that of Maltose fermentation regulatory protein YPR196W from Saccharomyces cerevisiae (strain ATCC 204508 / S288c) (Baker's yeast).